The following is a 630-amino-acid chain: Probable potassium transport system protein Kup (630 aa).

12 helical membrane passes run 17-37 (LAIA…LYSL), 51-71 (PSAI…VVGI), 105-125 (ITGL…GDAV), 144-164 (PQLS…LFWI), 175-195 (LFGP…VYHI), 218-238 (VLLA…AEAL), 255-275 (YVLV…LLLL), 283-303 (PFFL…STVA), 344-364 (IYVP…VIGF), 374-394 (YGIA…VVMV), 402-422 (LLVA…FGAN), and 428-448 (QGGW…MTWY).

It belongs to the HAK/KUP transporter (TC 2.A.72) family.

Its subcellular location is the cell inner membrane. The catalysed reaction is K(+)(in) + H(+)(in) = K(+)(out) + H(+)(out). Its function is as follows. Transport of potassium into the cell. Likely operates as a K(+):H(+) symporter. The polypeptide is Probable potassium transport system protein Kup (Burkholderia thailandensis (strain ATCC 700388 / DSM 13276 / CCUG 48851 / CIP 106301 / E264)).